Reading from the N-terminus, the 813-residue chain is Ribonuclease R (813 aa).

One can recognise an RNB domain in the interval 260 to 587; sequence RVDLRDLPLV…LHRAIKYLLA (328 aa). Lysine 544 carries the post-translational modification N6-acetyllysine. Residues 644-725 enclose the S1 motif domain; the sequence is GNVFKGVISS…DERKIDFSLI (82 aa). A disordered region spans residues 733–813; it reads NVGKTAREKA…KRAAKKKVAE (81 aa). Composition is skewed to basic and acidic residues over residues 737-749 and 761-774; these read TARE…DAGK and VNFE…GEKK. A compositionally biased stretch (basic residues) spans 775–791; the sequence is TKPKAAKKDARKAKKPS. Over residues 792 to 801 the composition is skewed to low complexity; sequence AKTQKIAAAT. The segment covering 802–813 has biased composition (basic residues); sequence KAKRAAKKKVAE.

It belongs to the RNR ribonuclease family. RNase R subfamily. Monomer.

It localises to the cytoplasm. The catalysed reaction is Exonucleolytic cleavage in the 3'- to 5'-direction to yield nucleoside 5'-phosphates.. Functionally, 3'-5' exoribonuclease that releases 5'-nucleoside monophosphates and is involved in maturation of structured RNAs. Required for the expression of virulence genes on the large plasmid of S.flexneri at the post-transcriptional level. This is Ribonuclease R from Shigella flexneri.